We begin with the raw amino-acid sequence, 472 residues long: Violaxanthin de-epoxidase, chloroplastic (472 aa).

6 cysteine pairs are disulfide-bonded: cysteine 133/cysteine 151, cysteine 138/cysteine 145, cysteine 157/cysteine 174, cysteine 161/cysteine 170, cysteine 189/cysteine 196, and cysteine 242/cysteine 372. Residues 379–462 adopt a coiled-coil conformation; that stretch reads VERLEKTVEE…MEAGEVEKLF (84 aa).

Belongs to the calycin superfamily. Lipocalin family. Disulfide bonds. Reduction of the disulfides results in loss of a rigid structure, a decrease in thermal stability of 15 degrees Celsius and a loss of activity.

The protein localises to the plastid. Its subcellular location is the chloroplast thylakoid membrane. The enzyme catalyses all-trans-violaxanthin + 2 L-ascorbate = all-trans-zeaxanthin + 2 L-dehydroascorbate + 2 H2O. Irreversibly inhibited by DTT and iodoacetamide at pH 5.7 or pH 5.2, but not at pH 7.2. Regulated through Ca(2+) gating of H(+) flux at the CFoH(+) channel. Requires the presence of lipids forming reverse hexagonal structures such as monogalactosyldiacylglyceride (MGDG) or phosphatidylethanolamine. A negative curvature elastic stress in the thylakoid lipid bilayer is required for VDE1 activity. Functionally, part of the xanthophyll (or violaxanthin) cycle for controlling the concentration of zeaxanthin in chloroplasts. Catalyzes the two-step mono de-epoxidation reaction. Stereospecific for all-trans xanthophylls. Zeaxanthin induces the dissipation of excitation energy in the chlorophyll of the light-harvesting protein complex of photosystem II. The polypeptide is Violaxanthin de-epoxidase, chloroplastic (Spinacia oleracea (Spinach)).